Reading from the N-terminus, the 305-residue chain is Homoserine O-acetyltransferase (305 aa).

Cys142 serves as the catalytic Acyl-thioester intermediate. Substrate-binding residues include Lys163 and Ser192. The active-site Proton acceptor is His235. Residue Glu237 is part of the active site. Arg249 is a substrate binding site.

Belongs to the MetA family.

It localises to the cytoplasm. The enzyme catalyses L-homoserine + acetyl-CoA = O-acetyl-L-homoserine + CoA. It participates in amino-acid biosynthesis; L-methionine biosynthesis via de novo pathway; O-acetyl-L-homoserine from L-homoserine: step 1/1. Transfers an acetyl group from acetyl-CoA to L-homoserine, forming acetyl-L-homoserine. This Dinoroseobacter shibae (strain DSM 16493 / NCIMB 14021 / DFL 12) protein is Homoserine O-acetyltransferase.